A 237-amino-acid chain; its full sequence is Insulin-like growth factor-binding protein 4 (237 aa).

Residues 2 to 82 (EAIHCPPCSE…VHGQGVCMEL (81 aa)) form the IGFBP N-terminal domain. 6 cysteine pairs are disulfide-bonded: cysteine 6–cysteine 32, cysteine 9–cysteine 34, cysteine 17–cysteine 35, cysteine 23–cysteine 38, cysteine 46–cysteine 59, and cysteine 53–cysteine 79. A glycan (N-linked (GlcNAc...) asparagine) is linked at asparagine 104. 4 cysteine pairs are disulfide-bonded: cysteine 110–cysteine 117, cysteine 153–cysteine 183, cysteine 194–cysteine 205, and cysteine 207–cysteine 228. Residues 150-228 (QGSCQSELHR…GLEPKGELDC (79 aa)) enclose the Thyroglobulin type-1 domain. Phosphoserine is present on serine 234.

In terms of assembly, binds IGF2 more than IGF1. There are two different molecular mass variants (29 kDa and 24 kDa forms). The 29 kDa form was shown to be N-glycosylated. Detected in adult ewe, liver &gt; kidney &gt; lung &gt;&gt; heart and also in several fetal tissues.

The protein resides in the secreted. In terms of biological role, IGF-binding proteins prolong the half-life of the IGFs and have been shown to either inhibit or stimulate the growth promoting effects of the IGFs on cell culture. They alter the interaction of IGFs with their cell surface receptors. The polypeptide is Insulin-like growth factor-binding protein 4 (IGFBP4) (Ovis aries (Sheep)).